A 471-amino-acid polypeptide reads, in one-letter code: Heat shock 70 kDa protein 13 (471 aa).

Positions 1 to 22 are cleaved as a signal peptide; that stretch reads MAREMTILGSAVLTLLLAGYLA. Over residues 315-341 the composition is skewed to basic and acidic residues; sequence EQDRKEPHSSDTELPKDKLSSADDHRV. The segment at 315–352 is disordered; the sequence is EQDRKEPHSSDTELPKDKLSSADDHRVNSGFGRGLSDK.

Belongs to the heat shock protein 70 family. In terms of assembly, binds UBQLN2. In terms of tissue distribution, constitutively expressed in all tissues.

The protein resides in the microsome. It is found in the endoplasmic reticulum. Functionally, has peptide-independent ATPase activity. The polypeptide is Heat shock 70 kDa protein 13 (HSPA13) (Homo sapiens (Human)).